Here is a 221-residue protein sequence, read N- to C-terminus: Phosphoribosylformylglycinamidine synthase subunit PurQ (221 aa).

Positions 6–221 (VGVVVFPGSN…LFTLKSLILK (216 aa)) constitute a Glutamine amidotransferase type-1 domain. Cys89 acts as the Nucleophile in catalysis. Catalysis depends on residues His197 and Glu199.

In terms of assembly, part of the FGAM synthase complex composed of 1 PurL, 1 PurQ and 2 PurS subunits.

The protein localises to the cytoplasm. It carries out the reaction N(2)-formyl-N(1)-(5-phospho-beta-D-ribosyl)glycinamide + L-glutamine + ATP + H2O = 2-formamido-N(1)-(5-O-phospho-beta-D-ribosyl)acetamidine + L-glutamate + ADP + phosphate + H(+). The catalysed reaction is L-glutamine + H2O = L-glutamate + NH4(+). It participates in purine metabolism; IMP biosynthesis via de novo pathway; 5-amino-1-(5-phospho-D-ribosyl)imidazole from N(2)-formyl-N(1)-(5-phospho-D-ribosyl)glycinamide: step 1/2. Its function is as follows. Part of the phosphoribosylformylglycinamidine synthase complex involved in the purines biosynthetic pathway. Catalyzes the ATP-dependent conversion of formylglycinamide ribonucleotide (FGAR) and glutamine to yield formylglycinamidine ribonucleotide (FGAM) and glutamate. The FGAM synthase complex is composed of three subunits. PurQ produces an ammonia molecule by converting glutamine to glutamate. PurL transfers the ammonia molecule to FGAR to form FGAM in an ATP-dependent manner. PurS interacts with PurQ and PurL and is thought to assist in the transfer of the ammonia molecule from PurQ to PurL. In Prochlorococcus marinus (strain MIT 9312), this protein is Phosphoribosylformylglycinamidine synthase subunit PurQ.